A 203-amino-acid polypeptide reads, in one-letter code: Large ribosomal subunit protein uL13 (203 aa).

The residue at position 2 (Ala2) is an N-acetylalanine. The residue at position 59 (Arg59) is a Citrulline. Ser77 bears the Phosphoserine mark. Arg140 is modified (citrulline). At Lys191 the chain carries N6-acetyllysine.

This sequence belongs to the universal ribosomal protein uL13 family. As to quaternary structure, component of the 60S ribosome. Component of the GAIT complex. Interacts with EIF4G1. In terms of processing, phosphorylation at Ser-77 upon interferon-gamma treatment in macrophages involves a DAPK1-DAPK3 kinase cascade and is causing release from the ribosome, association with the GAIT complex and subsequent involvement in transcript-selective translation inhibition. Citrullinated by PADI4.

The protein resides in the cytoplasm. Functionally, associated with ribosomes but is not required for canonical ribosome function and has extra-ribosomal functions. Component of the GAIT (gamma interferon-activated inhibitor of translation) complex which mediates interferon-gamma-induced transcript-selective translation inhibition in inflammation processes. Upon interferon-gamma activation and subsequent phosphorylation dissociates from the ribosome and assembles into the GAIT complex which binds to stem loop-containing GAIT elements in the 3'-UTR of diverse inflammatory mRNAs (such as ceruplasmin) and suppresses their translation. In the GAIT complex interacts with m7G cap-bound eIF4G at or near the eIF3-binding site and blocks the recruitment of the 43S ribosomal complex. Involved in methylation of rRNA. The polypeptide is Large ribosomal subunit protein uL13 (RPL13A) (Canis lupus familiaris (Dog)).